Consider the following 255-residue polypeptide: Probable ubiquitin carboxyl-terminal hydrolase (255 aa).

The 225-residue stretch at 13-237 folds into the UCH catalytic domain; it reads NWIPLEANPE…IRFNLMGLVK (225 aa). Residues 16–21 form an interaction with ubiquitin region; that stretch reads PLEANP. C103 (nucleophile) is an active-site residue. H177 functions as the Proton donor in the catalytic mechanism. The interval 227 to 232 is interaction with ubiquitin; the sequence is EIRFNL. Residues 235 to 255 form a disordered region; that stretch reads LVKKPNEESEEEEEKEKEETK. Over residues 242–255 the composition is skewed to acidic residues; that stretch reads ESEEEEEKEKEETK.

It belongs to the peptidase C12 family.

The protein localises to the cytoplasm. The enzyme catalyses Thiol-dependent hydrolysis of ester, thioester, amide, peptide and isopeptide bonds formed by the C-terminal Gly of ubiquitin (a 76-residue protein attached to proteins as an intracellular targeting signal).. In terms of biological role, ubiquitin-protein hydrolase is involved both in the processing of ubiquitin precursors and of ubiquitinated proteins. This enzyme is a thiol protease that recognizes and hydrolyzes a peptide bond at the C-terminal glycine of either ubiquitin or nedd8. The chain is Probable ubiquitin carboxyl-terminal hydrolase (uch1) from Dictyostelium discoideum (Social amoeba).